Consider the following 547-residue polypeptide: Chaperonin GroEL 1 (547 aa).

ATP is bound by residues 30–33 (TLGP), Lys51, 87–91 (DGTTT), Gly415, and Asp496. Positions 525-547 (KPEPKSPAGGPGMGGMGGMDGMM) are disordered. Over residues 533–547 (GGPGMGGMGGMDGMM) the composition is skewed to gly residues.

This sequence belongs to the chaperonin (HSP60) family. Forms a cylinder of 14 subunits composed of two heptameric rings stacked back-to-back. Interacts with the co-chaperonin GroES.

The protein localises to the cytoplasm. The enzyme catalyses ATP + H2O + a folded polypeptide = ADP + phosphate + an unfolded polypeptide.. Its function is as follows. Together with its co-chaperonin GroES, plays an essential role in assisting protein folding. The GroEL-GroES system forms a nano-cage that allows encapsulation of the non-native substrate proteins and provides a physical environment optimized to promote and accelerate protein folding. This Cereibacter sphaeroides (strain ATCC 17023 / DSM 158 / JCM 6121 / CCUG 31486 / LMG 2827 / NBRC 12203 / NCIMB 8253 / ATH 2.4.1.) (Rhodobacter sphaeroides) protein is Chaperonin GroEL 1.